The sequence spans 105 residues: Large ribosomal subunit protein bL21 (105 aa).

Belongs to the bacterial ribosomal protein bL21 family. As to quaternary structure, part of the 50S ribosomal subunit. Contacts protein L20.

Its function is as follows. This protein binds to 23S rRNA in the presence of protein L20. The sequence is that of Large ribosomal subunit protein bL21 from Methylobacterium sp. (strain 4-46).